Here is a 332-residue protein sequence, read N- to C-terminus: UPF0194 membrane protein YbhG (332 aa).

A signal peptide spans 1-16 (MMKKPVVIGLAVVVLA). A coiled-coil region spans residues 108–209 (EEIAQAAAAV…LNLQDSTLIA (102 aa)).

This sequence belongs to the UPF0194 family.

The protein resides in the periplasm. The chain is UPF0194 membrane protein YbhG from Escherichia coli (strain 55989 / EAEC).